The sequence spans 534 residues: MTIGSLGSTEFALHGKPAIRWGDLPQRVGKPETRRYQKVLLLNPSATLFRHDLPRCTYPLGLGYIAAVLEKYGYEVKILDVFAEGYYNAQPVDGDDQFLRYGLSDDDIVKVMKEFGPDVVGISSIFSNQADNVHHLLKLADLVTPEAVTAIGGAHARYFPKACLDDPNLDAVFLGEGEMTFLLWMEHLNGNVSDDEVHGIAWRDRDGKVQIKPELPLISSMRPEGPETGKSSPMLSMAGELDHIPFPAWHHYNMEKYFEIKAYQSPYTVGSRVGQLYTSRGCTAHCTFCTTTHFWGQKLRRRSVQDVVDEVLRLRDEYGIDEFHIQDDNITNDMDHARELFRAFKEVGLPWATPQGTALWRMDEELLDLMAESGAYQVTFAIESGVQRVLKELIKKPLNLERTSHLIKYARSLGMHVHGFFIIGMPPMCGNAGESIEEMQASYDYAEEAGFSSASFFAASPIVGSELLRECIRQGFVDPEESLYRMTYKQGIINVPGLWDGEEIAELAAKFNRDFNARRDRAYTPQKQWNANQY.

The B12-binding domain maps to 38-195 (KVLLLNPSAT…EHLNGNVSDD (158 aa)). Residues 268–496 (TVGSRVGQLY…TYKQGIINVP (229 aa)) enclose the Radical SAM core domain. The [4Fe-4S] cluster site is built by Cys-282, Cys-286, and Cys-289.

It belongs to the radical SAM superfamily. The cofactor is [4Fe-4S] cluster. Requires methylcob(III)alamin as cofactor.

The catalysed reaction is cytidine 5'-{[hydroxy(2-hydroxyethyl)phosphonoyl]phosphate} + AH2 + 2 S-adenosyl-L-methionine = cytidine 5'-({hydroxy[(S)-2-hydroxypropyl]phosphonoyl}phosphate) + 5'-deoxyadenosine + L-methionine + A + S-adenosyl-L-homocysteine + 2 H(+). It functions in the pathway antibiotic biosynthesis; fosfomycin biosynthesis. Functionally, involved in fosfomycin biosynthesis. Catalyzes the C-methylation of cytidylyl-2-hydroxyethylphosphonate (HEP-CMP) to form cytidylyl-2-hydroxypropylphosphonate (HPP-CMP). The C-methylation is not stereoselective and the ratio of (S)- to (R)-HPP-CMP is almost equal in vitro. The protein is Cytidylyl-2-hydroxyethylphosphonate methyltransferase of Streptomyces wedmorensis.